The chain runs to 126 residues: Holo-[acyl-carrier-protein] synthase (126 aa).

The Mg(2+) site is built by D9 and E58.

The protein belongs to the P-Pant transferase superfamily. AcpS family. Requires Mg(2+) as cofactor.

The protein localises to the cytoplasm. It carries out the reaction apo-[ACP] + CoA = holo-[ACP] + adenosine 3',5'-bisphosphate + H(+). Functionally, transfers the 4'-phosphopantetheine moiety from coenzyme A to a Ser of acyl-carrier-protein. This Klebsiella pneumoniae subsp. pneumoniae (strain ATCC 700721 / MGH 78578) protein is Holo-[acyl-carrier-protein] synthase.